The primary structure comprises 130 residues: Small ribosomal subunit protein uS9 (130 aa).

The segment at 109-130 (RVKERKKYGQKGARAKFQFSKR) is disordered.

The protein belongs to the universal ribosomal protein uS9 family.

This is Small ribosomal subunit protein uS9 from Desulfotalea psychrophila (strain LSv54 / DSM 12343).